Here is a 413-residue protein sequence, read N- to C-terminus: Cardiolipin synthase B (413 aa).

2 PLD phosphodiesterase domains span residues 108 to 135 (IFRR…SAEH) and 285 to 312 (RRRP…DPLS). Catalysis depends on residues His113, Lys115, Asp120, His290, Lys292, and Asp297. The segment at 388 to 413 (AQVPPPAQPEMETQDRVDPENTGVKP) is disordered.

This sequence belongs to the phospholipase D family. Cardiolipin synthase subfamily. ClsB sub-subfamily.

The protein localises to the cell membrane. It catalyses the reaction 2 a 1,2-diacyl-sn-glycero-3-phospho-(1'-sn-glycerol) = a cardiolipin + glycerol. Functionally, catalyzes the phosphatidyl group transfer from one phosphatidylglycerol molecule to another to form cardiolipin (CL) (diphosphatidylglycerol) and glycerol. In Salmonella typhimurium (strain LT2 / SGSC1412 / ATCC 700720), this protein is Cardiolipin synthase B.